Reading from the N-terminus, the 87-residue chain is Large ribosomal subunit protein eL31 (87 aa).

The protein belongs to the eukaryotic ribosomal protein eL31 family.

The sequence is that of Large ribosomal subunit protein eL31 (rpl31e) from Methanocaldococcus jannaschii (strain ATCC 43067 / DSM 2661 / JAL-1 / JCM 10045 / NBRC 100440) (Methanococcus jannaschii).